The primary structure comprises 468 residues: Argininosuccinate lyase (468 aa).

Belongs to the lyase 1 family. Argininosuccinate lyase subfamily.

It is found in the cytoplasm. It catalyses the reaction 2-(N(omega)-L-arginino)succinate = fumarate + L-arginine. The protein operates within amino-acid biosynthesis; L-arginine biosynthesis; L-arginine from L-ornithine and carbamoyl phosphate: step 3/3. The polypeptide is Argininosuccinate lyase (Sphingopyxis alaskensis (strain DSM 13593 / LMG 18877 / RB2256) (Sphingomonas alaskensis)).